A 584-amino-acid polypeptide reads, in one-letter code: Aspartate--tRNA(Asp/Asn) ligase (584 aa).

Glu177 contributes to the L-aspartate binding site. The interval 201-204 (QLFK) is aspartate. Arg223 contributes to the L-aspartate binding site. ATP contacts are provided by residues 223–225 (RDE) and Gln232. His447 lines the L-aspartate pocket. Glu481 contacts ATP. L-aspartate is bound at residue Arg488. 533–536 (GLDR) is a binding site for ATP.

This sequence belongs to the class-II aminoacyl-tRNA synthetase family. Type 1 subfamily. As to quaternary structure, homodimer.

It is found in the cytoplasm. The enzyme catalyses tRNA(Asx) + L-aspartate + ATP = L-aspartyl-tRNA(Asx) + AMP + diphosphate. Functionally, aspartyl-tRNA synthetase with relaxed tRNA specificity since it is able to aspartylate not only its cognate tRNA(Asp) but also tRNA(Asn). Reaction proceeds in two steps: L-aspartate is first activated by ATP to form Asp-AMP and then transferred to the acceptor end of tRNA(Asp/Asn). This chain is Aspartate--tRNA(Asp/Asn) ligase, found in Chlamydia caviae (strain ATCC VR-813 / DSM 19441 / 03DC25 / GPIC) (Chlamydophila caviae).